Reading from the N-terminus, the 248-residue chain is MYSAQSSISKLTNLCEISSVEVGQHFYWQIGGFQVHAQVLITSWIVIAILLGLAILATQNLQTIPTSGQNFVEYILEFIRDLTRTQIGEEEYRPWVPFIGTMFLFIFVSNWSGALLPWRIFELPHGELAAPTNDINTTVALALPTSVAYFYAGLRKKGLSYSGKYIQPTPILLPINILEDFTKPLPLSFRLFGNILADELVVAVPISLVPLVVPIPMMFLGLFTSAIQALIFATLAAAYIGESMEGHH.

5 consecutive transmembrane segments (helical) span residues 37 to 57 (AQVLITSWIVIAILLGLAILA), 96 to 116 (VPFIGTMFLFIFVSNWSGALL), 134 to 154 (DINTTVALALPTSVAYFYAGL), 200 to 220 (LVVAVPISLVPLVVPIPMMFL), and 221 to 241 (GLFTSAIQALIFATLAAAYIG).

Belongs to the ATPase A chain family. As to quaternary structure, F-type ATPases have 2 components, CF(1) - the catalytic core - and CF(0) - the membrane proton channel. CF(1) has five subunits: alpha(3), beta(3), gamma(1), delta(1), epsilon(1). CF(0) has four main subunits: a, b, b' and c.

The protein localises to the plastid. It localises to the chloroplast thylakoid membrane. Its function is as follows. Key component of the proton channel; it plays a direct role in the translocation of protons across the membrane. The polypeptide is ATP synthase subunit a, chloroplastic (Anthoceros angustus (Hornwort)).